Reading from the N-terminus, the 78-residue chain is MSTIEERVKKIVAEQLGVKEEEVKNESSFVDDLGADSLDTVELVMALEEEFETEIPDEEAEKITTVQAAIDYVNAHQG.

The region spanning 2-77 is the Carrier domain; the sequence is STIEERVKKI…AAIDYVNAHQ (76 aa). Ser-37 carries the O-(pantetheine 4'-phosphoryl)serine modification.

This sequence belongs to the acyl carrier protein (ACP) family. In terms of processing, 4'-phosphopantetheine is transferred from CoA to a specific serine of apo-ACP by AcpS. This modification is essential for activity because fatty acids are bound in thioester linkage to the sulfhydryl of the prosthetic group.

It localises to the cytoplasm. It participates in lipid metabolism; fatty acid biosynthesis. Carrier of the growing fatty acid chain in fatty acid biosynthesis. This chain is Acyl carrier protein, found in Pseudomonas entomophila (strain L48).